Here is a 520-residue protein sequence, read N- to C-terminus: GMP synthase [glutamine-hydrolyzing] (520 aa).

The 193-residue stretch at 13 to 205 folds into the Glutamine amidotransferase type-1 domain; the sequence is KIIVLDYGSQ…ALNICKAKGD (193 aa). The active-site Nucleophile is the Cys-90. Residues His-179 and Glu-181 contribute to the active site. One can recognise a GMPS ATP-PPase domain in the interval 206 to 395; that stretch reads WSMDNFIDMQ…LGMPDHIVWR (190 aa). 233 to 239 contacts ATP; the sequence is SGGVDSS.

As to quaternary structure, homodimer.

The catalysed reaction is XMP + L-glutamine + ATP + H2O = GMP + L-glutamate + AMP + diphosphate + 2 H(+). It participates in purine metabolism; GMP biosynthesis; GMP from XMP (L-Gln route): step 1/1. Catalyzes the synthesis of GMP from XMP. The polypeptide is GMP synthase [glutamine-hydrolyzing] (Streptococcus pneumoniae (strain P1031)).